Reading from the N-terminus, the 594-residue chain is Glutamate decarboxylase 1 (594 aa).

A compositionally biased stretch (low complexity) spans 1–13; the sequence is MASSTPSSSATSS. The interval 1 to 23 is disordered; sequence MASSTPSSSATSSNAGADPNTTN. Phosphoserine is present on Ser78. Residue 190–192 coordinates 4-aminobutanoate; the sequence is QLS. Lys405 carries the post-translational modification N6-(pyridoxal phosphate)lysine. Arg567 contacts 4-aminobutanoate.

The protein belongs to the group II decarboxylase family. In terms of assembly, homodimer. The cofactor is pyridoxal 5'-phosphate.

The catalysed reaction is L-glutamate + H(+) = 4-aminobutanoate + CO2. Functionally, catalyzes the synthesis of the inhibitory neurotransmitter gamma-aminobutyric acid (GABA) with pyridoxal 5'-phosphate as cofactor. This Pongo abelii (Sumatran orangutan) protein is Glutamate decarboxylase 1 (GAD1).